Reading from the N-terminus, the 387-residue chain is MTMEGASGSSFGIDTILSSASSGSPGMMNGDFRPLGEARTADFRSQATPSPCSEIDTVGTAPSSPISVTMEPPEPHLVADATQHHHHLHHSQQPPPPAAAPTQSLQPLPQQQQPLPPQQPPPPPPQQLGSAASAPRTSTSSFLIKDILGDSKPLAACAPYSTSVSSPHHTPKQESNAVHESFRPKLEQEDSKTKLDKREDSQSDIKCHGTKEEGDREITSSRESPPVRAKKPRKARTAFSDHQLNQLERSFERQKYLSVQDRMDLAAALNLTDTQVKTWYQNRRTKWKRQTAVGLELLAEAGNYSALQRMFPSPYFYHPSLLGSMDSTTAAAAAAAMYSSMYRTPPAPHPQLQRPLVPRVLIHGLGPGGQPALNPLSSPIPGTPHPR.

Disordered stretches follow at residues 1-145 (MTME…FLIK), 157-240 (CAPY…TAFS), and 367-387 (PGGQ…PHPR). Over residues 7-24 (SGSSFGIDTILSSASSGS) the composition is skewed to polar residues. Residues 100–113 (APTQSLQPLPQQQQ) are compositionally biased toward low complexity. Pro residues predominate over residues 114 to 126 (PLPPQQPPPPPPQ). Over residues 127–141 (QLGSAASAPRTSTSS) the composition is skewed to low complexity. Positions 160-178 (YSTSVSSPHHTPKQESNAV) are enriched in polar residues. The segment covering 180–220 (ESFRPKLEQEDSKTKLDKREDSQSDIKCHGTKEEGDREITS) has biased composition (basic and acidic residues). The homeobox DNA-binding region spans 232 to 291 (PRKARTAFSDHQLNQLERSFERQKYLSVQDRMDLAAALNLTDTQVKTWYQNRRTKWKRQT).

It belongs to the BAR homeobox family.

It is found in the nucleus. Functionally, potential regulator of neural basic helix-loop-helix genes. The sequence is that of BarH-like 2 homeobox protein (BARHL2) from Homo sapiens (Human).